A 335-amino-acid chain; its full sequence is Zinc transporter ZIP11 (335 aa).

7 consecutive transmembrane segments (helical) span residues 12 to 32, 44 to 64, 72 to 92, 187 to 207, 256 to 278, 283 to 300, and 315 to 335; these read LLGT…VFIF, LGFA…APAV, GFGA…AAFV, IALL…AVGV, FWYG…FAVV, VLPY…YVVM, and LASW…VGLG.

Belongs to the ZIP transporter (TC 2.A.5) family.

The protein localises to the cell membrane. It localises to the nucleus. It is found in the cytoplasm. Its subcellular location is the golgi apparatus. The catalysed reaction is Zn(2+)(in) = Zn(2+)(out). The enzyme catalyses Cu(2+)(in) = Cu(2+)(out). In terms of biological role, zinc importer that regulates cytosolic zinc concentrations either via zinc influx from the extracellular compartment or efflux from intracellular organelles such as Golgi apparatus. May transport copper ions as well. The transport mechanism remains to be elucidated. This Rattus norvegicus (Rat) protein is Zinc transporter ZIP11 (Slc39a11).